The chain runs to 235 residues: Large ribosomal subunit protein uL1 (235 aa).

Belongs to the universal ribosomal protein uL1 family. Part of the 50S ribosomal subunit.

In terms of biological role, binds directly to 23S rRNA. The L1 stalk is quite mobile in the ribosome, and is involved in E site tRNA release. Its function is as follows. Protein L1 is also a translational repressor protein, it controls the translation of the L11 operon by binding to its mRNA. The chain is Large ribosomal subunit protein uL1 from Corynebacterium diphtheriae (strain ATCC 700971 / NCTC 13129 / Biotype gravis).